A 169-amino-acid polypeptide reads, in one-letter code: UPF0303 protein BMEI0598 (169 aa).

Belongs to the UPF0303 family.

The sequence is that of UPF0303 protein BMEI0598 from Brucella melitensis biotype 1 (strain ATCC 23456 / CCUG 17765 / NCTC 10094 / 16M).